The chain runs to 269 residues: Ribonuclease HII (269 aa).

An RNase H type-2 domain is found at 79–269 (TYLAGADEVG…SFLKNILNTF (191 aa)). A divalent metal cation is bound by residues Asp85, Glu86, and Asp182.

This sequence belongs to the RNase HII family. It depends on Mn(2+) as a cofactor. The cofactor is Mg(2+).

The protein localises to the cytoplasm. The enzyme catalyses Endonucleolytic cleavage to 5'-phosphomonoester.. Endonuclease that specifically degrades the RNA of RNA-DNA hybrids. This Clostridium novyi (strain NT) protein is Ribonuclease HII.